The sequence spans 425 residues: Inner membrane protein YqcE (425 aa).

Residues 1 to 8 lie on the Cytoplasmic side of the membrane; it reads MQHNSYRR. Residues 9–29 form a helical membrane-spanning segment; it reads WITLAIISFSGGVSFDLAYLR. Residues 30–48 lie on the Periplasmic side of the membrane; that stretch reads YIYQIPMAKFMGFSNTEIG. Residues 49 to 69 traverse the membrane as a helical segment; that stretch reads LIMSTFGIAAIILYAPSGVIA. The Cytoplasmic segment spans residues 70-75; it reads DKFSHR. A run of 2 helical transmembrane segments spans residues 76 to 96 and 97 to 117; these read KMITSAMIITGLLGLLMATYP and PLWVMLCIQIAFAITTILMLW. Residues 118-138 lie on the Cytoplasmic side of the membrane; sequence SVSIKAASLLGDHSEQGKIMG. The chain crosses the membrane as a helical span at residues 139 to 159; it reads WMEGLRGVGVMSLAVFTMWVF. At 160–171 the chain is on the periplasmic side; that stretch reads SRFAPDDSTSLK. Residues 172–192 form a helical membrane-spanning segment; that stretch reads TVIIIYSVVYILLGILCWFFV. The Cytoplasmic segment spans residues 193-219; the sequence is SDNNNLRSANNEEKQSFQLSDILAVLR. A helical membrane pass occupies residues 220–240; the sequence is ISTTWYCSMVIFGVFTIYAIL. Over 241–259 the chain is Periplasmic; that stretch reads SYSTNYLTEMYGMSLVAAS. A helical transmembrane segment spans residues 260-280; the sequence is YMGIVINKIFRALCGPLGGII. Residues 281–291 lie on the Cytoplasmic side of the membrane; sequence TTYSKVKSPTR. A helical transmembrane segment spans residues 292–312; it reads VIQILSVLGLLTLTALLVTNS. Asn313 is a topological domain (periplasmic). Residues 314-334 traverse the membrane as a helical segment; that stretch reads PQSVAMGIGLILLLGFTCYAS. The Cytoplasmic segment spans residues 335 to 354; the sequence is RGLYWACPGEARTPSYIMGT. A helical membrane pass occupies residues 355-375; that stretch reads TVGICSVIGFLPDVFVYPIIG. The Periplasmic portion of the chain corresponds to 376-388; that stretch reads HWQDTLPAAEAYR. Residues 389 to 409 traverse the membrane as a helical segment; sequence NMWLMGMAALGMVIVFTFLLF. The Cytoplasmic portion of the chain corresponds to 410 to 425; that stretch reads QKIRTADSAPAMASSK.

It to E.coli YihN.

It localises to the cell inner membrane. The sequence is that of Inner membrane protein YqcE (yqcE) from Escherichia coli (strain K12).